A 361-amino-acid chain; its full sequence is Putative agmatine deiminase (361 aa).

Catalysis depends on Cys-354, which acts as the Amidino-cysteine intermediate.

The protein belongs to the agmatine deiminase family.

It catalyses the reaction agmatine + H2O = N-carbamoylputrescine + NH4(+). This Streptococcus pneumoniae (strain P1031) protein is Putative agmatine deiminase.